A 333-amino-acid polypeptide reads, in one-letter code: Probable ABC transporter permease protein y4mJ (333 aa).

10 helical membrane passes run 30-50, 62-82, 84-104, 110-130, 133-153, 175-195, 228-248, 253-273, 274-294, and 300-320; these read LAIAGAIVLLVLAVGTQVPQA, AGAPLIIMSLGVLLVVITGGI, LSVGSVFSLTGMVTAQAMASG, ALIGLGVGLVFGSINGFLVTV, LAPFVVTLITFAVAGSLAFIV, IPGVPNYILFCIVLLVVIEIF, FAYVASSLLASFSGLLTISYI, STAGSSLMLQAIAAVVIGGAS, LLGGTGTAVGAVLGALMITVI, and LIGINSFWQGSVTGLAILIAV.

Belongs to the binding-protein-dependent transport system permease family. AraH/RbsC subfamily.

The protein localises to the cell inner membrane. Probably part of the binding-protein-dependent transport system y4mIJK. This system probably transports a sugar. Probably responsible for the translocation of the substrate across the membrane. In Sinorhizobium fredii (strain NBRC 101917 / NGR234), this protein is Probable ABC transporter permease protein y4mJ.